The chain runs to 634 residues: Bacteriophytochrome (634 aa).

Cys-13 provides a ligand contact to biliverdin IXalpha. The 106-residue stretch at 13–118 folds into the PAS 1 domain; it reads CAREPIHIPG…YPQQWLVEME (106 aa). The tract at residues 13–514 is photosensory core domain; that stretch reads CAREPIHIPG…ELMERKRFQQ (502 aa). Residues 151–305 enclose the GAF domain; it reads RVAKGLRSLI…VTDAVARTLA (155 aa). The interval 325–508 is phytochrome-specific (PHY); it reads TVREKLITDF…SLRVLIELME (184 aa). The tongue domain stretch occupies residues 452-480; the sequence is WAGNPQLAKLEDIPNSRLSPRKSFDLWQQ. Residues 515 to 590 enclose the PAS 2 domain; sequence DFTLLEASLS…ELLQDALRNG (76 aa). The segment at 515-634 is PAS9, output module, not required to bind biliverdin IX-alpha, required for dimerization; that stretch reads DFTLLEASLS…HWLLQLRDPE (120 aa).

The protein in the N-terminal section; belongs to the phytochrome family. Forms head-to-head homodimers. In terms of processing, contains one covalently linked biliverdin IX-alpha chromophore; present in the crystal structure as a mixture of Pr and Meta-R configurations.

Photoreceptor which exists in two forms that are reversibly interconvertible by light: far-red light (733 nm) converts protein to the red-absorbing (Pr) form, while red light (630 nm) partly converts the protein to the far-red-absorbing (Pfr) form. Regulates virulence of X.campestris pv. campestris on its host plants, perhaps by fine-tuning expression to ambient light levels and/or spatial cues. The Pr form may sense light and partially inhibit virulence; in the dark (Pfr form) biofilm and xanathan production rise and bacteria are more virulent. Strains overexpressing this protein have significantly decreased amounts of extracellular beta-1,4-endoglucanase, produce less xanthin and have decreased transcription of genes involved in virulence such as endoglucanases, type 2 secretion systems, xanthan production and flagellar-dependent motility. The protein is Bacteriophytochrome (bphP) of Xanthomonas campestris pv. campestris (strain 8004).